The following is a 290-amino-acid chain: Xyloglucan endotransglucosylase/hydrolase protein 9 (290 aa).

The N-terminal stretch at 1-26 (MVGMDLFKCVMMIMVLVVSCGEAVSG) is a signal peptide. Residues 27-215 (AKFDELYRSS…WSHAPFVASY (189 aa)) enclose the GH16 domain. A glycan (N-linked (GlcNAc...) asparagine) is linked at N55. The Nucleophile role is filled by E101. The active-site Proton donor is E105. E105 is a xyloglucan binding site. N-linked (GlcNAc...) asparagine glycosylation is present at N109. Residues 118–120 (QTN), 128–130 (NRE), 194–195 (DW), and G199 each bind xyloglucan. 2 cysteine pairs are disulfide-bonded: C223-C234 and C271-C284. Residue R276 coordinates xyloglucan.

It belongs to the glycosyl hydrolase 16 family. XTH group 1 subfamily. In terms of processing, contains at least one intrachain disulfide bond essential for its enzymatic activity. As to expression, highly expressed in shoot apices. In the vegetative and reproductive phases, it accumulates in the shoot apex region, where cell division is most active. In the reproductive phase, it is also expressed in flower buds, flower stalks and internodes bearing flowers.

The protein localises to the secreted. The protein resides in the cell wall. Its subcellular location is the extracellular space. It localises to the apoplast. The catalysed reaction is breaks a beta-(1-&gt;4) bond in the backbone of a xyloglucan and transfers the xyloglucanyl segment on to O-4 of the non-reducing terminal glucose residue of an acceptor, which can be a xyloglucan or an oligosaccharide of xyloglucan.. Functionally, catalyzes xyloglucan endohydrolysis (XEH) and/or endotransglycosylation (XET). Cleaves and religates xyloglucan polymers, an essential constituent of the primary cell wall, and thereby participates in cell wall construction of growing tissues. Involved in internodal cell elongation. This is Xyloglucan endotransglucosylase/hydrolase protein 9 (XTH9) from Arabidopsis thaliana (Mouse-ear cress).